Here is a 128-residue protein sequence, read N- to C-terminus: Arginine decarboxylase proenzyme (128 aa).

The Schiff-base intermediate with substrate; via pyruvic acid role is filled by Ser76. Ser76 bears the Pyruvic acid (Ser); by autocatalysis mark. His81 (proton acceptor; for processing activity) is an active-site residue. The active-site Proton donor; for catalytic activity is the Cys96.

The protein belongs to the prokaryotic AdoMetDC family. Type 1 subfamily. As to quaternary structure, heterooctamer of four alpha and four beta chains arranged as a tetramer of alpha/beta heterodimers. Pyruvate serves as cofactor. Post-translationally, is synthesized initially as an inactive proenzyme. Formation of the active enzyme involves a self-maturation process in which the active site pyruvoyl group is generated from an internal serine residue via an autocatalytic post-translational modification. Two non-identical subunits are generated from the proenzyme in this reaction, and the pyruvate is formed at the N-terminus of the alpha chain, which is derived from the carboxyl end of the proenzyme. The post-translation cleavage follows an unusual pathway, termed non-hydrolytic serinolysis, in which the side chain hydroxyl group of the serine supplies its oxygen atom to form the C-terminus of the beta chain, while the remainder of the serine residue undergoes an oxidative deamination to produce ammonia and the pyruvoyl group blocking the N-terminus of the alpha chain.

The catalysed reaction is L-arginine + H(+) = agmatine + CO2. Its pathway is amine and polyamine biosynthesis; agmatine biosynthesis; agmatine from L-arginine: step 1/1. In terms of biological role, specifically catalyzes the decarboxylation of L-arginine to agmatine. Has no S-adenosylmethionine decarboxylase (AdoMetDC) activity. The polypeptide is Arginine decarboxylase proenzyme (Sulfurisphaera tokodaii (strain DSM 16993 / JCM 10545 / NBRC 100140 / 7) (Sulfolobus tokodaii)).